The primary structure comprises 242 residues: Uridylate kinase (242 aa).

An ATP-binding site is contributed by 16–19 (KVSG). Position 58 (Gly-58) interacts with UMP. ATP is bound by residues Gly-59 and Arg-63. UMP is bound by residues Asp-78 and 139–146 (TGNPFCTT). Residues Thr-166, Gln-167, Tyr-172, and Asp-175 each contribute to the ATP site.

This sequence belongs to the UMP kinase family. Homohexamer.

The protein localises to the cytoplasm. It catalyses the reaction UMP + ATP = UDP + ADP. The protein operates within pyrimidine metabolism; CTP biosynthesis via de novo pathway; UDP from UMP (UMPK route): step 1/1. With respect to regulation, inhibited by UTP. Functionally, catalyzes the reversible phosphorylation of UMP to UDP. This is Uridylate kinase from Rickettsia canadensis (strain McKiel).